A 554-amino-acid polypeptide reads, in one-letter code: Hydroxylamine reductase (554 aa).

Positions 3, 6, 18, and 25 each coordinate [2Fe-2S] cluster. Histidine 252, glutamate 276, cysteine 320, cysteine 408, cysteine 436, cysteine 461, glutamate 495, and lysine 497 together coordinate hybrid [4Fe-2O-2S] cluster. A Cysteine persulfide modification is found at cysteine 408.

This sequence belongs to the HCP family. Requires [2Fe-2S] cluster as cofactor. It depends on hybrid [4Fe-2O-2S] cluster as a cofactor.

Its subcellular location is the cytoplasm. The enzyme catalyses A + NH4(+) + H2O = hydroxylamine + AH2 + H(+). In terms of biological role, catalyzes the reduction of hydroxylamine to form NH(3) and H(2)O. This chain is Hydroxylamine reductase, found in Photobacterium profundum (strain SS9).